Consider the following 345-residue polypeptide: Protein RecA (345 aa).

68–75 contributes to the ATP binding site; it reads GVESSGKT.

Belongs to the RecA family.

The protein resides in the cytoplasm. Functionally, can catalyze the hydrolysis of ATP in the presence of single-stranded DNA, the ATP-dependent uptake of single-stranded DNA by duplex DNA, and the ATP-dependent hybridization of homologous single-stranded DNAs. It interacts with LexA causing its activation and leading to its autocatalytic cleavage. The polypeptide is Protein RecA (Aquifex aeolicus (strain VF5)).